Reading from the N-terminus, the 396-residue chain is Actin-related protein 6 (396 aa).

At Thr-2 the chain carries N-acetylthreonine. Lys-260 is modified (N6-acetyllysine).

The protein belongs to the actin family. ARP6 subfamily. Component of the chromatin-remodeling SRCAP complex composed of at least SRCAP, DMAP1, RUVBL1, RUVBL2, ACTL6A, YEATS4, ACTR6 and ZNHIT1. Interacts with CBX1, CBX3 and CBX5.

The protein resides in the cytoplasm. It localises to the cytoskeleton. It is found in the nucleus. Its subcellular location is the nucleolus. Its function is as follows. Required for formation and/or maintenance of proper nucleolar structure and function. Plays a dual role in the regulation of ribosomal DNA (rDNA) transcription. In the presence of high glucose, maintains active rDNA transcription through H2A.Z deposition and under glucose starvation, is required for the repression of rDNA transcription, and this function may be independent of H2A.Z. This is Actin-related protein 6 (Actr6) from Mus musculus (Mouse).